The primary structure comprises 144 residues: MKETKEELRQRIGEEAYQVTQNAATERAFTGKYDEFFEDGIYVDVVSGEPLFSSKDKYNSGCGWPAFTQPINNRMVTNHEDNSFGMHRVEVRSRQAQSHLGHVFNDGPQDRGGLRYCINSAALQFIPVAELDEKGYGEYKKLFD.

The 124-residue stretch at 5 to 128 (KEELRQRIGE…NSAALQFIPV (124 aa)) folds into the MsrB domain. Cys-117 functions as the Nucleophile in the catalytic mechanism.

This sequence belongs to the MsrB Met sulfoxide reductase family.

It catalyses the reaction L-methionyl-[protein] + [thioredoxin]-disulfide + H2O = L-methionyl-(R)-S-oxide-[protein] + [thioredoxin]-dithiol. The chain is Peptide methionine sulfoxide reductase MsrB from Ligilactobacillus salivarius (strain UCC118) (Lactobacillus salivarius).